A 387-amino-acid chain; its full sequence is Probable purine permease 6 (387 aa).

The interval 1–24 is disordered; that stretch reads MMELESETQELHLHVNGEPEGKFS. Basic and acidic residues predominate over residues 9–24; the sequence is QELHLHVNGEPEGKFS. Helical transmembrane passes span 36-56, 68-88, 106-126, 129-149, 162-182, 201-221, 238-258, 283-303, 309-329, and 333-353; these read LRVS…TLLG, WLET…YYYL, FLTL…HCIL, FGLL…QLAF, ITPF…LLVI, YVIG…VLSL, ILDM…VGLF, INIG…GLII, FSNV…VVFF, and MSGI…SYGY. A disordered region spans residues 362–387; the sequence is PEEDQELPQSKEEEEQKQVDTIHVQA. Over residues 370–381 the composition is skewed to basic and acidic residues; it reads QSKEEEEQKQVD.

The protein belongs to the purine permeases (TC 2.A.7.14) family.

It is found in the membrane. In Arabidopsis thaliana (Mouse-ear cress), this protein is Probable purine permease 6 (PUP6).